Reading from the N-terminus, the 412-residue chain is Subtilisin-like protease 6 (412 aa).

Positions 1 to 20 are cleaved as a signal peptide; that stretch reads MGFITKAIPIVLAALSTVNG. Positions 21-127 are excised as a propeptide; it reads AKILEAGPHA…VRTSTNGTNL (107 aa). Residues 36 to 120 form the Inhibitor I9 domain; the sequence is KYIVVMKREV…YIEPDFVVRT (85 aa). N-linked (GlcNAc...) asparagine glycosylation is found at N123 and N126. The Peptidase S8 domain occupies 135 to 412; that stretch reads SWGLARVSSK…SKLIYNGSGK (278 aa). Catalysis depends on charge relay system residues D167 and H198. 2 N-linked (GlcNAc...) asparagine glycosylation sites follow: N252 and N264. S358 (charge relay system) is an active-site residue. N-linked (GlcNAc...) asparagine glycosylation is present at N408.

This sequence belongs to the peptidase S8 family.

It localises to the secreted. Secreted subtilisin-like serine protease with keratinolytic activity that contributes to pathogenicity. The polypeptide is Subtilisin-like protease 6 (SUB6) (Trichophyton tonsurans (Scalp ringworm fungus)).